A 414-amino-acid polypeptide reads, in one-letter code: COUP transcription factor 2 (414 aa).

The interval 1–72 (MAMVVSTWRD…PGGPGSDKQQ (72 aa)) is disordered. Residues 27 to 37 (PPVPGPPPGAP) are compositionally biased toward pro residues. Positions 38 to 57 (HTPQTPGQGGPASTPAQTAA) are enriched in low complexity. Thr51 bears the Phosphothreonine mark. Over residues 58–67 (GGQGGPGGPG) the composition is skewed to gly residues. The segment at residues 76–151 (HIECVVCGDK…VGMRREAVQR (76 aa)) is a DNA-binding region (nuclear receptor). 2 consecutive NR C4-type zinc fingers follow at residues 79–99 (CVVCGDKSSGKHYGQFTCEGC) and 115–139 (CRANRNCPIDQHHRNQCQYCRLKKC). Residues 117–414 (ANRNCPIDQH…SFNWPYMAIQ (298 aa)) form an interaction with ZFPM2 region. Residues 177 to 403 (YLSGYISLLL…TLIRDMLLSG (227 aa)) enclose the NR LBD domain. An important for dimerization region spans residues 337-414 (LQEKSQCALE…SFNWPYMAIQ (78 aa)).

It belongs to the nuclear hormone receptor family. NR2 subfamily. Interacts with SQSTM1. Binds DNA as a dimer; homodimer or heterodimer with NR2F6. Interacts with NCOA1, NCOA2, NCOA3 and PPARGC1A. Interacts with ZFPM2.

It localises to the nucleus. Its function is as follows. Ligand-activated transcription factor. Activated by high concentrations of 9-cis-retinoic acid and all-trans-retinoic acid, but not by dexamethasone, cortisol or progesterone (in vitro). Regulation of the apolipoprotein A-I gene transcription. Binds to DNA site A. May be required to establish ovary identity during early gonad development. This is COUP transcription factor 2 (NR2F2) from Bos taurus (Bovine).